Here is a 301-residue protein sequence, read N- to C-terminus: Transcription factor bHLH103 (301 aa).

The 78-residue stretch at 29 to 106 (PRSAEIVVDF…LEGLFDSSEQ (78 aa)) folds into the KRAB domain. Disordered regions lie at residues 161 to 184 (EKSG…ETPS) and 239 to 272 (TSPH…PRQD). The region spanning 180–229 (LETPSHFPSFKVRKEKLGDRITALQQLVSPFGKTDTASVLHDAIDYIKFL) is the bHLH domain. Over residues 239–269 (TSPHLNSIGSGEQKQWSDKSSNNTHNQNCSP) the composition is skewed to polar residues.

Homodimer. As to expression, mature root endodermis.

It localises to the nucleus. In Arabidopsis thaliana (Mouse-ear cress), this protein is Transcription factor bHLH103 (BHLH103).